Reading from the N-terminus, the 221-residue chain is Kinetochore protein Spc25 (221 aa).

Residues 63–114 are a coiled coil; sequence VIQRREEMEKRVSFMEELAQEVEATKQRNLVMREQIKQQKMLVRQRKNEIME.

Belongs to the SPC25 family. As to quaternary structure, component of the Ndc80 complex, which is composed of Ndc80, Nuf2 and Spc25.

It localises to the nucleus. The protein localises to the chromosome. It is found in the centromere. Its subcellular location is the kinetochore. Functionally, acts as a component of the essential kinetochore-associated Ndc80 complex, which is required for chromosome segregation and spindle checkpoint activity during meiosis and mitosis. Required for kinetochore integrity and the organization of stable microtubule binding sites in the outer plate of the kinetochore. Participates in SAC signaling that responds specifically to disruptions in spindle microtubule dynamics. The NDC80 complex synergistically enhances the affinity of the SKA1 complex for microtubules and may allow the NDC80 complex to track depolymerizing microtubules. This Drosophila eugracilis (Fruit fly) protein is Kinetochore protein Spc25.